The chain runs to 451 residues: Adenylyltransferase and sulfurtransferase MOCS3 (451 aa).

Position 60 is a phosphothreonine (Thr60). Residues Gly99, Asp120, 127 to 131, Lys144, and 188 to 189 contribute to the ATP site; these read SNFHR and DN. Positions 229 and 232 each coordinate Zn(2+). The Glycyl thioester intermediate; for adenylyltransferase activity role is filled by Cys246. Zn(2+)-binding residues include Cys304 and Cys307. Residues 353-449 enclose the Rhodanese domain; sequence QQQPHLLIDV…WTHKVDPSFP (97 aa). The active-site Cysteine persulfide intermediate; for sulfurtransferase activity is the Cys408.

The protein in the N-terminal section; belongs to the HesA/MoeB/ThiF family. UBA4 subfamily. Zn(2+) is required as a cofactor.

It is found in the cytoplasm. Its subcellular location is the cytosol. It catalyses the reaction [molybdopterin-synthase sulfur-carrier protein]-C-terminal Gly-Gly + ATP + H(+) = [molybdopterin-synthase sulfur-carrier protein]-C-terminal Gly-Gly-AMP + diphosphate. The enzyme catalyses [molybdopterin-synthase sulfur-carrier protein]-C-terminal Gly-Gly-AMP + S-sulfanyl-L-cysteinyl-[cysteine desulfurase] + AH2 = [molybdopterin-synthase sulfur-carrier protein]-C-terminal-Gly-aminoethanethioate + L-cysteinyl-[cysteine desulfurase] + A + AMP + 2 H(+). It participates in tRNA modification; 5-methoxycarbonylmethyl-2-thiouridine-tRNA biosynthesis. Its pathway is cofactor biosynthesis; molybdopterin biosynthesis. In terms of biological role, plays a central role in 2-thiolation of mcm(5)S(2)U at tRNA wobble positions of cytosolic tRNA(Lys), tRNA(Glu) and tRNA(Gln). Also essential during biosynthesis of the molybdenum cofactor. Acts by mediating the C-terminal thiocarboxylation of sulfur carriers URM1 and MOCS2A. Its N-terminus first activates URM1 and MOCS2A as acyl-adenylates (-COAMP), then the persulfide sulfur on the catalytic cysteine is transferred to URM1 and MOCS2A to form thiocarboxylation (-COSH) of their C-terminus. The reaction probably involves hydrogen sulfide that is generated from the persulfide intermediate and that acts as a nucleophile towards URM1 and MOCS2A. Subsequently, a transient disulfide bond is formed. Does not use thiosulfate as sulfur donor; NFS1 probably acting as a sulfur donor for thiocarboxylation reactions. In Drosophila ananassae (Fruit fly), this protein is Adenylyltransferase and sulfurtransferase MOCS3.